The primary structure comprises 943 residues: Translation initiation factor IF-2 (943 aa).

The tract at residues 29 to 349 (LSVKSHSSSV…NNRGNSAPKL (321 aa)) is disordered. Basic and acidic residues-rich tracts occupy residues 69–82 (PKEE…DKAS), 112–137 (FKAE…DNRN), 145–155 (QGKRHNNDRRN), 163–196 (DHNK…RDNA), and 224–253 (RQSE…EKQQ). Low complexity predominate over residues 254-266 (AEVAVQKAAAETK). Over residues 296-309 (KSRDNHRVNEDGPK) the composition is skewed to basic and acidic residues. Residues 313–332 (NNKWNNQNQVRNQRNSNWNK) show a composition bias toward low complexity. One can recognise a tr-type G domain in the interval 445-614 (ERAPVVTIMG…LLVAEVEELK (170 aa)). Residues 454–461 (GHVDHGKT) are G1. 454–461 (GHVDHGKT) contributes to the GTP binding site. The segment at 479-483 (GITQH) is G2. Positions 500–503 (DTPG) are G3. GTP-binding positions include 500–504 (DTPGH) and 554–557 (NKID). Residues 554–557 (NKID) form a G4 region. The interval 590 to 592 (SAK) is G5.

This sequence belongs to the TRAFAC class translation factor GTPase superfamily. Classic translation factor GTPase family. IF-2 subfamily.

The protein resides in the cytoplasm. Functionally, one of the essential components for the initiation of protein synthesis. Protects formylmethionyl-tRNA from spontaneous hydrolysis and promotes its binding to the 30S ribosomal subunits. Also involved in the hydrolysis of GTP during the formation of the 70S ribosomal complex. The sequence is that of Translation initiation factor IF-2 from Streptococcus thermophilus (strain ATCC BAA-491 / LMD-9).